A 185-amino-acid polypeptide reads, in one-letter code: Ribosome-recycling factor (185 aa).

The protein belongs to the RRF family.

The protein localises to the cytoplasm. In terms of biological role, responsible for the release of ribosomes from messenger RNA at the termination of protein biosynthesis. May increase the efficiency of translation by recycling ribosomes from one round of translation to another. In Clostridium botulinum (strain Alaska E43 / Type E3), this protein is Ribosome-recycling factor.